The chain runs to 45 residues: Endo-1,4-beta-xylanase Xyn10A (45 aa).

It belongs to the glycosyl hydrolase 10 (cellulase F) family.

The protein resides in the secreted. It localises to the extracellular space. The enzyme catalyses Endohydrolysis of (1-&gt;4)-beta-D-xylosidic linkages in xylans.. It catalyses the reaction Endohydrolysis of (1-&gt;4)-beta-D-glucosidic linkages in cellulose, lichenin and cereal beta-D-glucans.. Its pathway is glycan degradation; xylan degradation. In terms of biological role, has xylanase, avicelase and cellobiohydrolase activity. This Gloeophyllum trabeum (Brown rot fungus) protein is Endo-1,4-beta-xylanase Xyn10A.